Consider the following 411-residue polypeptide: Peptidase T (411 aa).

His78 is a binding site for Zn(2+). The active site involves Asp80. Asp140 provides a ligand contact to Zn(2+). Residue Glu173 is the Proton acceptor of the active site. Glu174, Asp196, and His379 together coordinate Zn(2+).

It belongs to the peptidase M20B family. Requires Zn(2+) as cofactor.

It localises to the cytoplasm. The catalysed reaction is Release of the N-terminal residue from a tripeptide.. Cleaves the N-terminal amino acid of tripeptides. The sequence is that of Peptidase T from Yersinia pestis bv. Antiqua (strain Antiqua).